The chain runs to 261 residues: MTLGKNKRISKGGKRGKKKAQETMSRKEWYDVVAPKNFEVRQFGKTICNKTQGTKIAADYLRGRVYESNLADLNKTQGDDDAYRKVKFVVQEVQGRNLLTQFHSMEMTSDRVYFLLRKWCTTIEAAVEAKTADGYTLRLFVIAFTKKQSNQLSKNCYAKTRLVKWVRHRITNLIRQRLSKVNINEAVTLLTRNILRDRLAKRCNPIVPLRDLRIRKVKVVRTPRFDAQALLNAHGEIPASAEGEARVVEEAQEAPAAEATA.

Basic residues predominate over residues methionine 1 to lysine 18. Residues methionine 1–threonine 23 are disordered.

This sequence belongs to the eukaryotic ribosomal protein eS1 family. In terms of assembly, component of the small ribosomal subunit. Mature ribosomes consist of a small (40S) and a large (60S) subunit. The 40S subunit contains about 33 different proteins and 1 molecule of RNA (18S). The 60S subunit contains about 49 different proteins and 3 molecules of RNA (25S, 5.8S and 5S).

It localises to the cytoplasm. In Trypanosoma cruzi (strain CL Brener), this protein is Small ribosomal subunit protein eS1B.